The chain runs to 254 residues: Small ribosomal subunit protein uS2 (254 aa).

This sequence belongs to the universal ribosomal protein uS2 family.

This chain is Small ribosomal subunit protein uS2, found in Brucella ovis (strain ATCC 25840 / 63/290 / NCTC 10512).